A 345-amino-acid polypeptide reads, in one-letter code: High mobility group protein 20A (345 aa).

2 disordered regions span residues 1 to 124 (MENT…TERP) and 167 to 198 (QYQNTDAYQTYSRKAQSRQKGRQQRQEGVRGV). Composition is skewed to polar residues over residues 32 to 48 (LSGSSQAPFHPQSPTLQ) and 57 to 67 (LQQSGEQQLGN). A compositionally biased stretch (basic residues) spans 80–94 (TRRGGWTKGRKRKRS). The HMG box DNA-binding region spans 101 to 169 (PKAPLTGYVR…RYTKELQQYQ (69 aa)). The span at 112 to 124 (MNERREQLRTERP) shows a compositional bias: basic and acidic residues. Over residues 167-180 (QYQNTDAYQTYSRK) the composition is skewed to polar residues. The stretch at 227-290 (SKAREAELRQ…QHLQSVRQAL (64 aa)) forms a coiled coil.

Its subcellular location is the nucleus. Plays a role in neuronal differentiation. In Xenopus tropicalis (Western clawed frog), this protein is High mobility group protein 20A (hmg20a).